A 328-amino-acid chain; its full sequence is Tetraacyldisaccharide 4'-kinase (328 aa).

55–62 (TAGGNGKT) provides a ligand contact to ATP.

Belongs to the LpxK family.

The enzyme catalyses a lipid A disaccharide + ATP = a lipid IVA + ADP + H(+). Its pathway is glycolipid biosynthesis; lipid IV(A) biosynthesis; lipid IV(A) from (3R)-3-hydroxytetradecanoyl-[acyl-carrier-protein] and UDP-N-acetyl-alpha-D-glucosamine: step 6/6. In terms of biological role, transfers the gamma-phosphate of ATP to the 4'-position of a tetraacyldisaccharide 1-phosphate intermediate (termed DS-1-P) to form tetraacyldisaccharide 1,4'-bis-phosphate (lipid IVA). The protein is Tetraacyldisaccharide 4'-kinase of Escherichia coli O6:K15:H31 (strain 536 / UPEC).